The chain runs to 198 residues: Putative peptidyl-prolyl cis-trans isomerase (198 aa).

In terms of domain architecture, PPIase cyclophilin-type spans 14–195 (NEIKVAMHTN…HDVVIESIDV (182 aa)).

The protein belongs to the cyclophilin-type PPIase family.

It catalyses the reaction [protein]-peptidylproline (omega=180) = [protein]-peptidylproline (omega=0). In terms of biological role, PPIases accelerate the folding of proteins. It catalyzes the cis-trans isomerization of proline imidic peptide bonds in oligopeptides. In Staphylococcus haemolyticus (strain JCSC1435), this protein is Putative peptidyl-prolyl cis-trans isomerase.